We begin with the raw amino-acid sequence, 450 residues long: Glutathione reductase (450 aa).

Positions 14, 15, 34, 41, 42, 50, and 115 each coordinate FAD. Ser14 contacts glutathione. A disulfide bridge links Cys42 with Cys47. Positions 175, 178, 181, 198, 204, and 262 each coordinate NADP(+). Position 303 (Asp303) interacts with FAD. Asp309 contributes to the NADP(+) binding site. An FAD-binding site is contributed by Thr311. Residue Arg319 participates in glutathione binding. Val342 contacts NADP(+). His439 serves as a coordination point for FAD. His439 (proton acceptor) is an active-site residue.

It belongs to the class-I pyridine nucleotide-disulfide oxidoreductase family. In terms of assembly, homodimer. It depends on FAD as a cofactor.

Its subcellular location is the cytoplasm. It carries out the reaction 2 glutathione + NADP(+) = glutathione disulfide + NADPH + H(+). In terms of biological role, catalyzes the reduction of glutathione disulfide (GSSG) to reduced glutathione (GSH). Constitutes the major mechanism to maintain a high GSH:GSSG ratio in the cytosol. The chain is Glutathione reductase (gor) from Streptococcus thermophilus.